A 107-amino-acid polypeptide reads, in one-letter code: Integration host factor subunit alpha (107 aa).

It belongs to the bacterial histone-like protein family. As to quaternary structure, heterodimer of an alpha and a beta chain.

This protein is one of the two subunits of integration host factor, a specific DNA-binding protein that functions in genetic recombination as well as in transcriptional and translational control. In Bartonella tribocorum (strain CIP 105476 / IBS 506), this protein is Integration host factor subunit alpha.